The sequence spans 250 residues: Indole-3-glycerol phosphate synthase (250 aa).

The protein belongs to the TrpC family.

The catalysed reaction is 1-(2-carboxyphenylamino)-1-deoxy-D-ribulose 5-phosphate + H(+) = (1S,2R)-1-C-(indol-3-yl)glycerol 3-phosphate + CO2 + H2O. Its pathway is amino-acid biosynthesis; L-tryptophan biosynthesis; L-tryptophan from chorismate: step 4/5. This is Indole-3-glycerol phosphate synthase from Picrophilus torridus (strain ATCC 700027 / DSM 9790 / JCM 10055 / NBRC 100828 / KAW 2/3).